The sequence spans 384 residues: Histidinol-phosphate aminotransferase (384 aa).

N6-(pyridoxal phosphate)lysine is present on K223.

This sequence belongs to the class-II pyridoxal-phosphate-dependent aminotransferase family. It depends on pyridoxal 5'-phosphate as a cofactor.

It carries out the reaction L-histidinol phosphate + 2-oxoglutarate = 3-(imidazol-4-yl)-2-oxopropyl phosphate + L-glutamate. The protein operates within amino-acid biosynthesis; L-histidine biosynthesis; L-histidine from 5-phospho-alpha-D-ribose 1-diphosphate: step 7/9. This chain is Histidinol-phosphate aminotransferase (his3), found in Schizosaccharomyces pombe (strain 972 / ATCC 24843) (Fission yeast).